Consider the following 385-residue polypeptide: uncharacterized protein (385 aa).

Lys-194 is subject to N6-(pyridoxal phosphate)lysine.

Belongs to the class-V pyridoxal-phosphate-dependent aminotransferase family. The cofactor is pyridoxal 5'-phosphate.

This is an uncharacterized protein from Methanocaldococcus jannaschii (strain ATCC 43067 / DSM 2661 / JAL-1 / JCM 10045 / NBRC 100440) (Methanococcus jannaschii).